We begin with the raw amino-acid sequence, 252 residues long: Uracil-DNA glycosylase (252 aa).

The active-site Proton acceptor is aspartate 87.

The protein belongs to the uracil-DNA glycosylase (UDG) superfamily. UNG family.

The protein localises to the host nucleus. The catalysed reaction is Hydrolyzes single-stranded DNA or mismatched double-stranded DNA and polynucleotides, releasing free uracil.. Functionally, excises uracil residues from the DNA which can arise as a result of misincorporation of dUMP residues by DNA polymerase or deamination of cytosines. Therefore may reduce deleterious uracil incorporation into the viral genome, particularly in terminally differentiated cells which lack DNA repair enzymes. This chain is Uracil-DNA glycosylase (46), found in Saimiri sciureus (Common squirrel monkey).